The following is an 87-amino-acid chain: DNA-directed RNA polymerase subunit Rpo5 (87 aa).

The protein belongs to the archaeal Rpo5/eukaryotic RPB5 RNA polymerase subunit family. As to quaternary structure, part of the RNA polymerase complex.

The protein localises to the cytoplasm. It carries out the reaction RNA(n) + a ribonucleoside 5'-triphosphate = RNA(n+1) + diphosphate. Functionally, DNA-dependent RNA polymerase (RNAP) catalyzes the transcription of DNA into RNA using the four ribonucleoside triphosphates as substrates. The chain is DNA-directed RNA polymerase subunit Rpo5 from Thermoplasma acidophilum (strain ATCC 25905 / DSM 1728 / JCM 9062 / NBRC 15155 / AMRC-C165).